Here is a 320-residue protein sequence, read N- to C-terminus: ATP-dependent 6-phosphofructokinase (320 aa).

Gly-11 contacts ATP. An ADP-binding site is contributed by 21-25 (RAVVR). Residues 72–73 (RC) and 102–105 (GDGS) contribute to the ATP site. Asp-103 contributes to the Mg(2+) binding site. Position 125–127 (125–127 (TID)) interacts with substrate. Asp-127 acts as the Proton acceptor in catalysis. Arg-154 contributes to the ADP binding site. Substrate is bound by residues Arg-162 and 169 to 171 (MGR). Residues 185–187 (GAE) and 214–216 (KTH) contribute to the ADP site. Residues Glu-223, Arg-244, and 250–253 (HIQR) each bind substrate.

This sequence belongs to the phosphofructokinase type A (PFKA) family. ATP-dependent PFK group I subfamily. Prokaryotic clade 'B1' sub-subfamily. Homotetramer. The cofactor is Mg(2+).

The protein localises to the cytoplasm. It catalyses the reaction beta-D-fructose 6-phosphate + ATP = beta-D-fructose 1,6-bisphosphate + ADP + H(+). It functions in the pathway carbohydrate degradation; glycolysis; D-glyceraldehyde 3-phosphate and glycerone phosphate from D-glucose: step 3/4. Its activity is regulated as follows. Allosterically activated by ADP and other diphosphonucleosides, and allosterically inhibited by phosphoenolpyruvate. Its function is as follows. Catalyzes the phosphorylation of D-fructose 6-phosphate to fructose 1,6-bisphosphate by ATP, the first committing step of glycolysis. This Clostridium botulinum (strain Alaska E43 / Type E3) protein is ATP-dependent 6-phosphofructokinase.